A 581-amino-acid polypeptide reads, in one-letter code: Jasmonoyl--L-amino acid synthetase GH3.5 (581 aa).

ATP is bound at residue Ser-92. Jasmonate is bound at residue Ser-95. Residues Thr-115, Asn-161, and 324 to 329 (GASEGW) contribute to the ATP site. 159 to 163 (TTNLY) lines the an L-alpha-amino acid pocket. Residues 321–324 (ADYG) and Ser-326 each bind jasmonate. 534 to 538 (EILDH) is an an L-alpha-amino acid binding site. Lys-561 is a binding site for ATP.

This sequence belongs to the IAA-amido conjugating enzyme family. As to expression, expressed in green shoots, roots and flowers.

It carries out the reaction a jasmonate + an L-alpha-amino acid + ATP = a jasmonyl-L-amino acid + AMP + diphosphate + H(+). In terms of biological role, catalyzes the synthesis of jasmonate-amino acid conjugates by adenylation. Catalyzes the conjugation of jasmonate (JA) to Ile when expressed in a heterologous system (E.coli). Catalyzes in vitro the conjugation of jasmonate (JA) to Ile, Phe, Cys, Leu, Met, Ala, Val and Trp. Involved in the production of JA-Ile in response to infection by the rice blast fungus Magnaporthe oryzae. Required for the accumulation of the flavonoid phytoalexin sakuranetin in response to infection by the rice blast fungus. Involved in herbivory-induced JA-Ile accumulation. Involved in the production of JA-Ile in response to wounding. Required for modulation of light and JA signaling in photomorphogenesis. Required for normal seed development. Required for optimal flower opening and closing and anther dehiscence. May catalyze the synthesis of indole-3-acetic acid (IAA)-amino acid conjugates, providing a mechanism for the plant to cope with the presence of excess auxin. The chain is Jasmonoyl--L-amino acid synthetase GH3.5 from Oryza sativa subsp. japonica (Rice).